The sequence spans 605 residues: Replication and transcription activator (605 aa).

2 disordered regions span residues 307 to 380 and 447 to 499; these read SLPS…AEPE and RIRP…AVTP. Low complexity predominate over residues 321 to 338; it reads SADCGDSSSSSSDSGNSD. Residues 341–353 are compositionally biased toward basic and acidic residues; that stretch reads QSEREEARAEAPR. The segment covering 355–364 has biased composition (basic residues); the sequence is RAPKSRRTSR.

It belongs to the herpesviridae Rta family. As to quaternary structure, interacts with human ATF7IP protein, leading to promote and regulate host genes in virus-infected cells. Interacts with RNA polymerase III complex; this interaction downregulates small RNA transcription and 5'-pppRNA production.

The protein localises to the host nucleus. It is found in the virion tegument. In terms of biological role, immediate-early transcription factor that controls the initiation of viral lytic gene expression and lytic reactivation from latency. Triggers lytic replication, and initiates a cellular senescence program in epithelial cells. Up-regulates human DCR3/TNFRSF6B by directly binding to its receptor. Globally induces a proteasome-dependent loss of SUMOylated proteins in the host cell and the loss of promeylocytic leukemia nuclear bodies. Improves the stability of the triplex capsid protein TRX1 by reducing the ubiquitination level of the latter. Mediates evasion of inflammasome activation and antiviral responses (T- and NK cell activation) during EBV early lytic infection. This is Replication and transcription activator from Epstein-Barr virus (strain B95-8) (HHV-4).